We begin with the raw amino-acid sequence, 770 residues long: Protein PAT1 homolog 1 (770 aa).

The tract at residues 1-26 (MFRYESLEDCPLDEDEDAFQGLGEED) is disordered. The interval 1 to 84 (MFRYESLEDC…EMDLLGDHEE (84 aa)) is region A; interaction with DDX6/RCK. The interval 1-397 (MFRYESLEDC…HRSSHQDHLR (397 aa)) is involved in nuclear foci localization. Residues 7–26 (LEDCPLDEDEDAFQGLGEED) show a composition bias toward acidic residues. Residues 85 to 388 (NLAERLSKMV…LNGAGDRGSH (304 aa)) form a region N; interaction with decapping machinery region. The short motif at 86–95 (LAERLSKMVI) is the Nuclear export signal element. Ser177 carries the phosphoserine modification. A Phosphothreonine modification is found at Thr178. Ser179 and Ser184 each carry phosphoserine. Phosphothreonine is present on Thr194. An asymmetric dimethylarginine mark is found at Arg217, Arg223, and Arg263. The segment at 223-397 (RYPAPYGERM…HRSSHQDHLR (175 aa)) is involved in RNA-binding. A Phosphoserine modification is found at Ser278. An Asymmetric dimethylarginine modification is found at Arg284. The segment covering 314–323 (GFRAFFSAPP) has biased composition (low complexity). 2 disordered regions span residues 314-344 (GFRA…QNLR) and 360-399 (QHRR…LRKD). Residues 324–337 (SATPPPQQHPPGPG) show a composition bias toward pro residues. The segment covering 367 to 380 (QRQQQNRSQHRNLN) has biased composition (low complexity). Arg385 carries the omega-N-methylarginine modification. Over residues 385-399 (RGSHRSSHQDHLRKD) the composition is skewed to basic and acidic residues. The tract at residues 389 to 448 (RSSHQDHLRKDPYANLMLQREKDWVSKIQMMQLQSTDPYLDDFYYQNYFEKLEKLSAAEE) is region H. The tract at residues 398-770 (KDPYANLMLQ…TKLQLVQGIR (373 aa)) is involved in nuclear speckle localization. The interval 449-770 (IQGDGPKKER…TKLQLVQGIR (322 aa)) is region C.

Belongs to the PAT1 family. Interacts (via region A) with DDX6/RCK. Interacts (via region H and region C) with LSM1 and LSM4. Interacts (via region N) with DCP1A, DCP2, EDC3, EDC4 and XRN1. Interacts with the CCR4-NOT complex. Interacts with the Lsm-containing SMN-Sm protein complex. Interacts with EIF4ENIF1/4E-T. Ubiquitous.

It is found in the cytoplasm. It localises to the P-body. The protein resides in the nucleus. Its subcellular location is the PML body. The protein localises to the nucleus speckle. Functionally, RNA-binding protein involved in deadenylation-dependent decapping of mRNAs, leading to the degradation of mRNAs. Acts as a scaffold protein that connects deadenylation and decapping machinery. Required for cytoplasmic mRNA processing body (P-body) assembly. Its function is as follows. (Microbial infection) In case of infection, required for translation and replication of hepatitis C virus (HCV). The polypeptide is Protein PAT1 homolog 1 (PATL1) (Homo sapiens (Human)).